The sequence spans 212 residues: Adenylate kinase (212 aa).

10–15 lines the ATP pocket; it reads GAGKGT. Residues 30–59 form an NMP region; that stretch reads AIGDIFRTIIKTSTSEAELINNYVKQGELI. AMP is bound by residues arginine 36, 57–59, 85–88, and glutamine 92; these read ELI and GYPR. Residues 122–160 are LID; the sequence is GRYSCKNCGKIYNRYFVQPKTDNVCDVCGSSTFDYRKDD. Arginine 123 provides a ligand contact to ATP. Residues cysteine 126 and cysteine 129 each contribute to the Zn(2+) site. 132-133 provides a ligand contact to ATP; it reads IY. Cysteine 146 and cysteine 149 together coordinate Zn(2+). Arginine 157 and arginine 168 together coordinate AMP. ATP is bound at residue lysine 196.

It belongs to the adenylate kinase family. As to quaternary structure, monomer.

The protein localises to the cytoplasm. It carries out the reaction AMP + ATP = 2 ADP. The protein operates within purine metabolism; AMP biosynthesis via salvage pathway; AMP from ADP: step 1/1. Its function is as follows. Catalyzes the reversible transfer of the terminal phosphate group between ATP and AMP. Plays an important role in cellular energy homeostasis and in adenine nucleotide metabolism. The polypeptide is Adenylate kinase (Rickettsia conorii (strain ATCC VR-613 / Malish 7)).